The sequence spans 314 residues: 2,3-dihydroxyphenylpropionate/2,3-dihydroxicinnamic acid 1,2-dioxygenase (314 aa).

His-115 functions as the Proton donor in the catalytic mechanism. The active-site Proton acceptor is His-179.

It belongs to the LigB/MhpB extradiol dioxygenase family. Homotetramer. Fe(2+) serves as cofactor.

It catalyses the reaction 3-(2,3-dihydroxyphenyl)propanoate + O2 = (2Z,4E)-2-hydroxy-6-oxonona-2,4-dienedioate + H(+). The enzyme catalyses (2E)-3-(2,3-dihydroxyphenyl)prop-2-enoate + O2 = (2Z,4E,7E)-2-hydroxy-6-oxonona-2,4,7-trienedioate + H(+). Its pathway is aromatic compound metabolism; 3-phenylpropanoate degradation. In terms of biological role, catalyzes the non-heme iron(II)-dependent oxidative cleavage of 2,3-dihydroxyphenylpropionic acid and 2,3-dihydroxicinnamic acid into 2-hydroxy-6-ketononadienedioate and 2-hydroxy-6-ketononatrienedioate, respectively. The sequence is that of 2,3-dihydroxyphenylpropionate/2,3-dihydroxicinnamic acid 1,2-dioxygenase from Klebsiella pneumoniae subsp. pneumoniae (strain ATCC 700721 / MGH 78578).